Here is a 237-residue protein sequence, read N- to C-terminus: Ribosomal RNA small subunit methyltransferase G (237 aa).

S-adenosyl-L-methionine contacts are provided by residues Gly-76, Phe-81, 128–129 (VE), and Arg-147.

The protein belongs to the methyltransferase superfamily. RNA methyltransferase RsmG family.

Its subcellular location is the cytoplasm. In terms of biological role, specifically methylates the N7 position of a guanine in 16S rRNA. This Prochlorococcus marinus (strain MIT 9215) protein is Ribosomal RNA small subunit methyltransferase G.